The following is a 546-amino-acid chain: Tegument protein UL21 homolog (546 aa).

It belongs to the alphaherpesvirinae HHV-1 UL21 protein family.

The protein resides in the virion tegument. Its subcellular location is the host cytoplasm. It localises to the host nucleus. Its function is as follows. May facilitate the viral transport through neural circuits. This is Tegument protein UL21 homolog (MDV033) from Gallus gallus (Chicken).